A 243-amino-acid polypeptide reads, in one-letter code: Small ribosomal subunit protein uS2 (243 aa).

Belongs to the universal ribosomal protein uS2 family.

The sequence is that of Small ribosomal subunit protein uS2 from Aliivibrio salmonicida (strain LFI1238) (Vibrio salmonicida (strain LFI1238)).